The chain runs to 500 residues: NAD(P)H-quinone oxidoreductase chain 4, chloroplastic (500 aa).

14 consecutive transmembrane segments (helical) span residues 4–24 (FPWL…MLFL), 35–55 (YTIC…CYNF), 87–107 (IGTI…AFPV), 113–130 (LFHF…GSFS), 134–154 (LLLF…LLSM), 167–187 (FILY…GISL), 211–231 (ILFY…IPLH), 242–262 (HYST…YGLV), 272–292 (AHSM…IYAA), 305–325 (IAYS…SITD), 330–350 (GAIL…FLAG), 386–406 (LALP…GIIT), 416–436 (ILII…LLSM), and 462–482 (LFLS…PDFV).

Belongs to the complex I subunit 4 family.

It localises to the plastid. It is found in the chloroplast thylakoid membrane. It carries out the reaction a plastoquinone + NADH + (n+1) H(+)(in) = a plastoquinol + NAD(+) + n H(+)(out). It catalyses the reaction a plastoquinone + NADPH + (n+1) H(+)(in) = a plastoquinol + NADP(+) + n H(+)(out). The chain is NAD(P)H-quinone oxidoreductase chain 4, chloroplastic from Olimarabidopsis pumila (Dwarf rocket).